A 745-amino-acid chain; its full sequence is Immunoglobulin superfamily containing leucine-rich repeat protein 2 (745 aa).

An N-terminal signal peptide occupies residues 1–18 (MFPLRALWLVWALLGVAG). The 33-residue stretch at 19–51 (SCPEPCACVDKYAHQFADCAYKELREVPEGLPA) folds into the LRRNT domain. Residues 19 to 589 (SCPEPCACVD…VFSTKKELPS (571 aa)) lie on the Extracellular side of the membrane. N-linked (GlcNAc...) asparagine glycosylation occurs at Asn52. LRR repeat units lie at residues 52-73 (NVTTLSLSANKITVLRRGAFAD), 76-97 (QVTSLWLAHNEVRTVEPGALAV), 100-123 (QLKNLDLSHNFISSFPWSDLRNLS), 124-145 (ALQLLKMNHNRLGSLPRDALGA), and 148-169 (DLRSLRINNNRLRTLAPGTFDA). Residue Asn121 is glycosylated (N-linked (GlcNAc...) asparagine). An LRRCT domain is found at 181–232 (NPFHCGCGLVWLQAWAASTRVSLPEPDSIACASPPALQGVPVYRLPALPCAP). Positions 233–371 (PSVHLSAEPP…GANSTSIRVA (139 aa)) constitute an Ig-like domain. A disulfide bridge connects residues Cys260 and Cys355. The segment at 287 to 326 (VLSGEDDGVGAEEGEGEGDGDLLTQTQAQTPTPAPAWPAP) is disordered. Positions 290–306 (GEDDGVGAEEGEGEGDG) are enriched in acidic residues. Residues Asn337 and Asn364 are each glycosylated (N-linked (GlcNAc...) asparagine). Residues 375 to 466 (TGPPKHAPGA…QRCGNGDPSR (92 aa)) are disordered. Residues 431–449 (TETEPEEDTSEGEEAEDQI) show a composition bias toward acidic residues. N-linked (GlcNAc...) asparagine glycosylation is found at Asn474 and Asn563. The helical transmembrane segment at 590-610 (LLVIVAVSVFLLVLATVPLLG) threads the bilayer. Topologically, residues 611-745 (AACCHLLAKH…INGNYRQTAG (135 aa)) are cytoplasmic. The segment at 656-722 (KSYPAGGEAG…FEAGSEYSDR (67 aa)) is disordered. The span at 665 to 683 (GGEEPEDVQGEGLDEDAEQ) shows a compositional bias: acidic residues. At Tyr719 the chain carries Phosphotyrosine. Ser720 is modified (phosphoserine).

Homomultimer. Interacts with NTRK1/TrkA.

The protein resides in the cell membrane. Required for axon extension during neural development. The protein is Immunoglobulin superfamily containing leucine-rich repeat protein 2 (ISLR2) of Homo sapiens (Human).